We begin with the raw amino-acid sequence, 97 residues long: Transcription and mRNA export factor SUS1 (97 aa).

It belongs to the ENY2 family. Component of the nuclear pore complex (NPC)-associated TREX-2 complex (transcription and export complex 2), composed of at least SUS1, SAC3, THP1, SEM1, and CDC31. TREX-2 contains 2 SUS1 chains. The TREX-2 complex interacts with the nucleoporin NUP1. Component of the 1.8 MDa SAGA transcription coactivator-HAT complex. SAGA is built of 5 distinct domains with specialized functions. Within the SAGA complex, SUS1, SGF11, SGF73 and UBP8 form an additional subcomplex of SAGA called the DUB module (deubiquitination module). Interacts directly with THP1, SAC3, SGF11, and with the RNA polymerase II.

The protein resides in the nucleus. Its subcellular location is the nucleoplasm. The protein localises to the cytoplasm. It localises to the P-body. Functionally, involved in mRNA export coupled transcription activation by association with both the TREX-2 and the SAGA complexes. At the promoters, SAGA is required for recruitment of the basal transcription machinery. It influences RNA polymerase II transcriptional activity through different activities such as TBP interaction and promoter selectivity, interaction with transcription activators, and chromatin modification through histone acetylation and deubiquitination. Within the SAGA complex, participates in a subcomplex required for deubiquitination of H2B and for the maintenance of steady-state H3 methylation levels. The TREX-2 complex functions in docking export-competent ribonucleoprotein particles (mRNPs) to the nuclear entrance of the nuclear pore complex (nuclear basket). TREX-2 participates in mRNA export and accurate chromatin positioning in the nucleus by tethering genes to the nuclear periphery. May also be involved in cytoplasmic mRNA decay by interaction with components of P-bodies. The polypeptide is Transcription and mRNA export factor SUS1 (Meyerozyma guilliermondii (strain ATCC 6260 / CBS 566 / DSM 6381 / JCM 1539 / NBRC 10279 / NRRL Y-324) (Yeast)).